Consider the following 815-residue polypeptide: Phenylalanine--tRNA ligase beta subunit (815 aa).

Residues 39-153 (ASHAQGVVVG…NVPDLGQPVG (115 aa)) enclose the tRNA-binding domain. In terms of domain architecture, B5 spans 414-498 (KSAEPVKLRR…RLVGFDRFEA (85 aa)). Residues Asp-476, Asp-482, Glu-485, and Glu-486 each coordinate Mg(2+). The region spanning 721-814 (PTVPAMELDL…LVKQFSAELR (94 aa)) is the FDX-ACB domain.

This sequence belongs to the phenylalanyl-tRNA synthetase beta subunit family. Type 1 subfamily. Tetramer of two alpha and two beta subunits. Mg(2+) is required as a cofactor.

The protein localises to the cytoplasm. It carries out the reaction tRNA(Phe) + L-phenylalanine + ATP = L-phenylalanyl-tRNA(Phe) + AMP + diphosphate + H(+). This chain is Phenylalanine--tRNA ligase beta subunit, found in Prochlorococcus marinus (strain MIT 9313).